The chain runs to 320 residues: Cytochrome f (320 aa).

The signal sequence occupies residues 1–35; sequence MENRNTFSWVKEQITRSISVSIMIYVITRTSISNA. Y36, C56, C59, and H60 together coordinate heme. Residues 286–305 traverse the membrane as a helical segment; the sequence is VQGLLFFFASVILAQVFLVL.

The protein belongs to the cytochrome f family. The 4 large subunits of the cytochrome b6-f complex are cytochrome b6, subunit IV (17 kDa polypeptide, petD), cytochrome f and the Rieske protein, while the 4 small subunits are PetG, PetL, PetM and PetN. The complex functions as a dimer. Heme serves as cofactor.

It localises to the plastid. Its subcellular location is the chloroplast thylakoid membrane. Functionally, component of the cytochrome b6-f complex, which mediates electron transfer between photosystem II (PSII) and photosystem I (PSI), cyclic electron flow around PSI, and state transitions. The protein is Cytochrome f (petA) of Triticum aestivum (Wheat).